Reading from the N-terminus, the 3433-residue chain is Genome polyprotein (3433 aa).

Residues 2–15 (SKKPGGPGKSRAVN) are interaction with host EXOC1. Topologically, residues 2–108 (SKKPGGPGKS…SSKQKKRGGK (107 aa)) are cytoplasmic. Residues 37 to 72 (LIDGKGPIRFVLALLAFFRFTAIAPTRAVLDRWRGV) are hydrophobic; homodimerization of capsid protein C. A propeptide spans 106–123 (GGKTGIAVMIGLIASVGA) (ER anchor for the capsid protein C, removed in mature form by serine protease NS3). A helical transmembrane segment spans residues 109 to 129 (TGIAVMIGLIASVGAVTLSNF). Residues 130-248 (QGKVMMTVNA…KATRYLVKTE (119 aa)) lie on the Extracellular side of the membrane. N138 carries N-linked (GlcNAc...) asparagine; by host glycosylation. A helical transmembrane segment spans residues 249-269 (SWILRNPGYALVAAVIGWMLG). Residues 270-275 (SNTMQR) are Cytoplasmic-facing. A helical membrane pass occupies residues 276–290 (VVFVVLLLLVAPAYS). Residues 291–743 (FNCLGMSNRD…QVFGGAFRSL (453 aa)) lie on the Extracellular side of the membrane. Disulfide bonds link C293–C320, C350–C406, C350–C411, C364–C395, C382–C406, and C382–C411. The fusion peptide stretch occupies residues 388–401 (DRGWGNGCGLFGKG). N444 is a glycosylation site (N-linked (GlcNAc...) asparagine; by host). 2 cysteine pairs are disulfide-bonded: C480-C578 and C595-C626. A helical membrane pass occupies residues 744-764 (FGGMSWITQGLLGALLLWMGI). Residues 765 to 770 (NARDRS) lie on the Cytoplasmic side of the membrane. A helical membrane pass occupies residues 771-791 (IALTFLAVGGVLLFLSVNVHA). Residues 792 to 1216 (DTGCAIDISR…AFAESNSGGD (425 aa)) are Extracellular-facing. Disulfide bonds link C795-C806 and C846-C934. 3 N-linked (GlcNAc...) asparagine; by host glycosylation sites follow: N921, N966, and N998. 4 disulfide bridges follow: C970–C1014, C1071–C1120, C1082–C1103, and C1104–C1107. A helical transmembrane segment spans residues 1217-1237 (VVHLALMATFKIQPVFMVASF). At 1238 to 1245 (LKARWTNQ) the chain is on the cytoplasmic side. A helical transmembrane segment spans residues 1246–1268 (ENILLMLAAVFFQMAYHDARQIL). Topologically, residues 1269 to 1288 (LWEIPDVLNSLAVAWMILRA) are lumenal. A helical membrane pass occupies residues 1289–1309 (ITFTTTSNVVVPLLALLTPGL). Residues 1310–1313 (RCLN) lie on the Cytoplasmic side of the membrane. A helical transmembrane segment spans residues 1314 to 1331 (LDVYRILLLMVGIGSLIR). Residues 1332–1345 (EKRSAAAKKKGASL) are Lumenal-facing. The chain crosses the membrane as a helical span at residues 1346–1366 (LCLALASTGLFNPMILAAGLI). Residues 1367–1375 (ACDPNRKRG) lie on the Cytoplasmic side of the membrane. The chain crosses the membrane as a helical span at residues 1376–1396 (WPATEVMTAVGLMFAIVGGLA). The Lumenal segment spans residues 1397–1399 (ELD). Residues 1400–1420 (IDSMAIPMTIAGLMFAAFVIS) form a helical membrane-spanning segment. Residues 1421–1477 (GKSTDMWIERTADISWESDAEITGSSERVDVRLDDDGNFQLMNDPGAPWKIWMLRMV) are Cytoplasmic-facing. Positions 1428-1467 (IERTADISWESDAEITGSSERVDVRLDDDGNFQLMNDPGA) are interacts with and activates NS3 protease. The helical intramembrane region spans 1478–1498 (CLAISAYTPWAILPSVVGFWI). Residues 1499–2174 (TLQYTKRGGV…RMALEELPDA (676 aa)) are Cytoplasmic-facing. In terms of domain architecture, Peptidase S7 spans 1506–1683 (GGVLWDTPSP…ERMDEPIPAG (178 aa)). Residues H1556, D1580, and S1640 each act as charge relay system; for serine protease NS3 activity in the active site. Residues 1686 to 1842 (PEMLRKKQIT…ESNSPISDLQ (157 aa)) enclose the Helicase ATP-binding domain. Positions 1690–1693 (RKKQ) are important for RNA-binding. 1699–1706 (LHPGAGKT) contributes to the ATP binding site. The DEAH box motif lies at 1790–1793 (DEAH). The 166-residue stretch at 1853-2018 (GYEWITEYTG…GLIAQFYQPE (166 aa)) folds into the Helicase C-terminal domain. K1894 is modified (N6-acetyllysine; by host). The interval 2169 to 2173 (EELPD) is regulates the ATPase activity of NS3 helicase. A helical transmembrane segment spans residues 2175–2195 (LQTIALIALLSVMTMGVFFLL). The Lumenal portion of the chain corresponds to 2196–2200 (MQRKG). The segment at residues 2201 to 2221 (IGKIGLGGAVLGVATFFCWMA) is an intramembrane region (helical). A topological domain (lumenal) is located at residue E2222. The helical transmembrane segment at 2223 to 2243 (VPGTKIAGMLLLSLLLMIVLI) threads the bilayer. Topologically, residues 2244–2258 (PEPEKQRSQTDNQLA) are cytoplasmic. Residues 2259–2279 (VFLICVMTLVSAVAANEMGWL) form a helical membrane-spanning segment. Residues 2280-2312 (DKTKSDISSLFGQRIEVKENFSMGEFLLDLRPA) lie on the Lumenal side of the membrane. Residues 2313-2333 (TAWSLYAVTTAVLTPLLKHLI) constitute an intramembrane region (helical). Residues 2334-2380 (TSDYINTSLTSINVQASALFTLARGFPFVDVGVSALLLAAGCWGQVT) lie on the Lumenal side of the membrane. The chain crosses the membrane as a helical span at residues 2381 to 2401 (LTVTVTAATLLFCHYAYMVPG). At 2402 to 2444 (WQAEAMRSAQRRTAAGIMKNAVVDGIVATDVPELERTTPIMQK) the chain is on the cytoplasmic side. A helical membrane pass occupies residues 2445-2465 (KVGQIMLILVSLAAVVVNPSV). The Lumenal segment spans residues 2466 to 2470 (KTVRE). Residues 2471–2491 (AGILITAAAVTLWENGASSVW) traverse the membrane as a helical segment. Residues 2492-3433 (NATTAIGLCH…DTTLVEDTVL (942 aa)) lie on the Cytoplasmic side of the membrane. The 266-residue stretch at 2529–2794 (GGAKGRTLGE…DVNLGSGTRA (266 aa)) folds into the mRNA cap 0-1 NS5-type MT domain. S2584 contributes to the S-adenosyl-L-methionine binding site. S2584 is subject to Phosphoserine. The active-site For 2'-O-MTase activity is K2589. S-adenosyl-L-methionine contacts are provided by G2614, W2615, T2632, K2633, E2639, D2659, V2660, D2674, and I2675. Residue D2674 is the For 2'-O-MTase activity of the active site. Catalysis depends on for 2'-O-MTase activity residues K2710 and E2746. Y2748 serves as a coordination point for S-adenosyl-L-methionine. Residues 2917-2919 (REK) carry the Nuclear localization signal motif. Positions 2968, 2972, 2977, and 2980 each coordinate Zn(2+). Positions 3058-3210 (GKIYADDTAG…KPLDDRFATS (153 aa)) constitute a RdRp catalytic domain. Residues H3245, C3261, and C3380 each contribute to the Zn(2+) site. The PDZ-binding motif lies at 3431-3433 (TVL).

The protein in the N-terminal section; belongs to the class I-like SAM-binding methyltransferase superfamily. mRNA cap 0-1 NS5-type methyltransferase family. Homodimer. Interacts (via N-terminus) with host EXOC1 (via C-terminus); this interaction results in EXOC1 degradation through the proteasome degradation pathway. Interacts with host DDX56; this interaction plays an important role in genomic RNA encapsidation. In terms of assembly, forms heterodimers with envelope protein E in the endoplasmic reticulum and Golgi. As to quaternary structure, homodimer; in the endoplasmic reticulum and Golgi. Homodimer; Homohexamer when secreted. NS1 interacts with NS4B. Interacts with host complement protein CFH; this interaction leads to the degradation of C3. In terms of assembly, forms a heterodimer with serine protease NS3. May form homooligomers. Interacts with human SPCS1. As to quaternary structure, forms a heterodimer with NS2B. Interacts with NS4B. Interacts with unphosphorylated RNA-directed RNA polymerase NS5; this interaction stimulates RNA-directed RNA polymerase NS5 guanylyltransferase activity. Interacts with host RTN3; this interaction is important to remodel host cell membranes. In terms of assembly, interacts with Serine protease/Helicase NS3. Interacts with NS1. As to quaternary structure, homodimer. Interacts with host STAT2; this interaction inhibits the phosphorylation of the latter, and, when all viral proteins are present (polyprotein), targets STAT2 for degradation. Specific enzymatic cleavages in vivo yield mature proteins. Cleavages in the lumen of endoplasmic reticulum are performed by host signal peptidase, whereas cleavages in the cytoplasmic side are performed by serine protease NS3. Signal cleavage at the 2K-4B site requires a prior NS3 protease-mediated cleavage at the 4A-2K site. Post-translationally, cleaved in post-Golgi vesicles by a host furin, releasing the mature small envelope protein M, and peptide pr. This cleavage is incomplete as up to 30% of viral particles still carry uncleaved prM. In terms of processing, N-glycosylated. N-glycosylated. The excreted form is glycosylated and this is required for efficient secretion of the protein from infected cells. Post-translationally, acetylated by host KAT5. Acetylation modulates NS3 RNA-binding and unwinding activities and plays an important positive role for viral replication. In terms of processing, phosphorylated on serines residues. This phosphorylation may trigger NS5 nuclear localization.

It localises to the virion. The protein resides in the host nucleus. Its subcellular location is the host cytoplasm. It is found in the host perinuclear region. The protein localises to the secreted. It localises to the virion membrane. The protein resides in the host endoplasmic reticulum membrane. It carries out the reaction Selective hydrolysis of -Xaa-Xaa-|-Yaa- bonds in which each of the Xaa can be either Arg or Lys and Yaa can be either Ser or Ala.. The catalysed reaction is RNA(n) + a ribonucleoside 5'-triphosphate = RNA(n+1) + diphosphate. The enzyme catalyses a ribonucleoside 5'-triphosphate + H2O = a ribonucleoside 5'-diphosphate + phosphate + H(+). It catalyses the reaction ATP + H2O = ADP + phosphate + H(+). It carries out the reaction a 5'-end (5'-triphosphoguanosine)-ribonucleoside in mRNA + S-adenosyl-L-methionine = a 5'-end (N(7)-methyl 5'-triphosphoguanosine)-ribonucleoside in mRNA + S-adenosyl-L-homocysteine. The catalysed reaction is a 5'-end (N(7)-methyl 5'-triphosphoguanosine)-ribonucleoside in mRNA + S-adenosyl-L-methionine = a 5'-end (N(7)-methyl 5'-triphosphoguanosine)-(2'-O-methyl-ribonucleoside) in mRNA + S-adenosyl-L-homocysteine + H(+). Plays a role in virus budding by binding to the cell membrane and gathering the viral RNA into a nucleocapsid that forms the core of a mature virus particle. During virus entry, may induce genome penetration into the host cytoplasm after hemifusion induced by the surface proteins. Can migrate to the cell nucleus where it modulates host functions. Overcomes the anti-viral effects of host EXOC1 by sequestering and degrading the latter through the proteasome degradation pathway. Functionally, inhibits RNA silencing by interfering with host Dicer. Its function is as follows. Prevents premature fusion activity of envelope proteins in trans-Golgi by binding to envelope protein E at pH6.0. After virion release in extracellular space, gets dissociated from E dimers. In terms of biological role, acts as a chaperone for envelope protein E during intracellular virion assembly by masking and inactivating envelope protein E fusion peptide. prM is the only viral peptide matured by host furin in the trans-Golgi network probably to avoid catastrophic activation of the viral fusion activity in acidic Golgi compartment prior to virion release. prM-E cleavage is inefficient, and many virions are only partially matured. These uncleaved prM would play a role in immune evasion. May play a role in virus budding. Exerts cytotoxic effects by activating a mitochondrial apoptotic pathway through M ectodomain. May display a viroporin activity. Functionally, binds to host cell surface receptor and mediates fusion between viral and cellular membranes. Envelope protein is synthesized in the endoplasmic reticulum in the form of heterodimer with protein prM. They play a role in virion budding in the ER, and the newly formed immature particle is covered with 60 spikes composed of heterodimer between precursor prM and envelope protein E. The virion is transported to the Golgi apparatus where the low pH causes dissociation of PrM-E heterodimers and formation of E homodimers. prM-E cleavage is inefficient, and many virions are only partially matured. These uncleaved prM would play a role in immune evasion. Its function is as follows. Involved in immune evasion, pathogenesis and viral replication. Once cleaved off the polyprotein, is targeted to three destinations: the viral replication cycle, the plasma membrane and the extracellular compartment. Essential for viral replication. Required for formation of the replication complex and recruitment of other non-structural proteins to the ER-derived membrane structures. Excreted as a hexameric lipoparticle that plays a role against host immune response. Antagonizing the complement function. Binds to the host macrophages and dendritic cells. Inhibits signal transduction originating from Toll-like receptor 3 (TLR3). In terms of biological role, component of the viral RNA replication complex that functions in virion assembly and antagonizes the host alpha/beta interferon antiviral response. Required cofactor for the serine protease function of NS3. May have membrane-destabilizing activity and form viroporins. Functionally, displays three enzymatic activities: serine protease, NTPase and RNA helicase. NS3 serine protease, in association with NS2B, performs its autocleavage and cleaves the polyprotein at dibasic sites in the cytoplasm: C-prM, NS2A-NS2B, NS2B-NS3, NS3-NS4A, NS4A-2K and NS4B-NS5. NS3 RNA helicase binds RNA and unwinds dsRNA in the 3' to 5' direction. NS3 supports the separation of RNA daughter and template strands during viral replication. The helicase part is involved in the inhibition of phosphorylation of host STAT1, and thereby inhibition of host type-I IFN signaling. In addition, NS3 assists the initiation of replication by unwinding the RNA secondary structure in the 3' non-translated region (NTR). Inhibits STAT2 translocation in the nucleus after IFN-alpha treatment. Its function is as follows. Facilitates host membrane remodelling necessary for viral replication by interacting with host RTN3. Regulates the ATPase activity of the NS3 helicase activity. NS4A allows NS3 helicase to conserve energy during unwinding. In terms of biological role, functions as a signal peptide for NS4B and is required for the interferon antagonism activity of the latter. Induces the formation of ER-derived membrane vesicles where the viral replication takes place. Inhibits interferon (IFN)-induced host STAT1 phosphorylation and nuclear translocation, thereby preventing the establishment of cellular antiviral state by blocking the IFN-alpha/beta pathway. Inhibits STAT2 translocation in the nucleus after IFN-alpha treatment. Functionally, replicates the viral (+) and (-) genome, and performs the capping of genomes in the cytoplasm. NS5 methylates viral RNA cap at guanine N-7 and ribose 2'-O positions. Besides its role in RNA genome replication, also prevents the establishment of cellular antiviral state by blocking the interferon-alpha/beta (IFN-alpha/beta) signaling pathway. Inhibits host JAK1 and TYK2 phosphorylation, thereby preventing activation of JAK-STAT signaling pathway. The protein is Genome polyprotein of Aedes (Tropical bont tick).